The following is a 364-amino-acid chain: DNA polymerase IV (364 aa).

Residues 14–198 form the UmuC domain; the sequence is IIHIDMDAFF…LPVEKFHGVG (185 aa). Positions 18 and 116 each coordinate Mg(2+). Glu-117 is an active-site residue.

The protein belongs to the DNA polymerase type-Y family. Monomer. Requires Mg(2+) as cofactor.

The protein localises to the cytoplasm. The enzyme catalyses DNA(n) + a 2'-deoxyribonucleoside 5'-triphosphate = DNA(n+1) + diphosphate. In terms of biological role, poorly processive, error-prone DNA polymerase involved in untargeted mutagenesis. Copies undamaged DNA at stalled replication forks, which arise in vivo from mismatched or misaligned primer ends. These misaligned primers can be extended by PolIV. Exhibits no 3'-5' exonuclease (proofreading) activity. May be involved in translesional synthesis, in conjunction with the beta clamp from PolIII. This Lactococcus lactis subsp. cremoris (strain MG1363) protein is DNA polymerase IV.